Consider the following 360-residue polypeptide: Probable neutral protease 2 homolog A (360 aa).

A signal peptide spans 1–17 (MQFTALLAALGAPLALA). Positions 18–183 (ASIPAAAHNH…DDSTGVIDKR (166 aa)) are excised as a propeptide. 3 disulfides stabilise this stretch: Cys191/Cys262, Cys269/Cys287, and Cys300/Cys360. The N-linked (GlcNAc...) asparagine glycan is linked to Asn205. His311 lines the Zn(2+) pocket. Glu312 is an active-site residue. Zn(2+)-binding residues include His315 and Asp326.

It belongs to the peptidase M35 family. The cofactor is Zn(2+).

The protein localises to the secreted. It carries out the reaction Preferential cleavage of bonds with hydrophobic residues in P1'. Also 3-Asn-|-Gln-4 and 8-Gly-|-Ser-9 bonds in insulin B chain.. Probable secreted metalloprotease that shows high activities on basic nuclear substrates such as histone and protamine. May be involved in virulence. The polypeptide is Probable neutral protease 2 homolog A (NpII-A) (Trichophyton rubrum (Athlete's foot fungus)).